The primary structure comprises 266 residues: Signal peptidase I (266 aa).

Residues 1-20 lie on the Cytoplasmic side of the membrane; that stretch reads MQTDNTKSNTNKTAKQEWGS. The helical transmembrane segment at 21 to 41 threads the bilayer; the sequence is FVFVICIALLIRILIMEPFTV. Topologically, residues 42 to 266 are periplasmic; the sequence is PTGSMKATIL…IFRNLYNTDV (225 aa). Catalysis depends on residues serine 45 and lysine 108.

The protein belongs to the peptidase S26 family.

The protein resides in the cell inner membrane. It carries out the reaction Cleavage of hydrophobic, N-terminal signal or leader sequences from secreted and periplasmic proteins.. This is Signal peptidase I (lepB) from Rickettsia massiliae (strain Mtu5).